The following is a 391-amino-acid chain: Casein kinase II subunit alpha (391 aa).

Residues 36–41 (QDDYQL) form an interaction with beta subunit region. In terms of domain architecture, Protein kinase spans 39–324 (YQLVRKLGRG…AREAMEHPYF (286 aa)). ATP-binding positions include 45-53 (LGRGKYSEV) and lysine 68. Aspartate 156 functions as the Proton acceptor in the catalytic mechanism. Threonine 344 and threonine 360 each carry phosphothreonine; by CDK1. Serine 362 and serine 370 each carry phosphoserine; by CDK1.

The protein belongs to the protein kinase superfamily. Ser/Thr protein kinase family. CK2 subfamily. As to quaternary structure, heterotetramer composed of two catalytic subunits (alpha chain and/or alpha' chain) and two regulatory subunits (beta chains). The tetramer can exist as a combination of 2 alpha/2 beta, 2 alpha'/2 beta or 1 alpha/1 alpha'/2 beta subunits. Also part of a CK2-SPT16-SSRP1 complex composed of SSRP1, SUPT16H, CSNK2A1, CSNK2A2 and CSNK2B, which forms following UV irradiation. Interacts with RNPS1. Interacts with SNAI1. Interacts with PML. Interacts with CCAR2. Interacts with HIRIP3. Post-translationally, phosphorylated at Thr-344, Thr-360, Ser-362 and Ser-370 by CDK1 in prophase and metaphase and dephosphorylated during anaphase. Phosphorylation does not directly affect casein kinase 2 activity, but may contribute to its regulation by forming binding sites for interacting proteins and/or targeting it to different compartments.

It is found in the nucleus. The enzyme catalyses L-seryl-[protein] + ATP = O-phospho-L-seryl-[protein] + ADP + H(+). The catalysed reaction is L-threonyl-[protein] + ATP = O-phospho-L-threonyl-[protein] + ADP + H(+). Constitutively active protein kinase whose activity is not directly affected by phosphorylation. Seems to be regulated by level of expression and localization. In terms of biological role, catalytic subunit of a constitutively active serine/threonine-protein kinase complex that phosphorylates a large number of substrates containing acidic residues C-terminal to the phosphorylated serine or threonine. Regulates numerous cellular processes, such as cell cycle progression, apoptosis and transcription, as well as viral infection. May act as a regulatory node which integrates and coordinates numerous signals leading to an appropriate cellular response. During mitosis, functions as a component of the p53/TP53-dependent spindle assembly checkpoint (SAC) that maintains cyclin-B-CDK1 activity and G2 arrest in response to spindle damage. Also required for p53/TP53-mediated apoptosis, phosphorylating 'Ser-392' of p53/TP53 following UV irradiation. Phosphorylates a number of DNA repair proteins in response to DNA damage, such as MDC1, MRE11, RAD9A, RAD51 and HTATSF1, promoting their recruitment to DNA damage sites. Can also negatively regulate apoptosis. Phosphorylates the caspases CASP9 and CASP2 and the apoptotic regulator NOL3. Phosphorylation protects CASP9 from cleavage and activation by CASP8, and inhibits the dimerization of CASP2 and activation of CASP8. Phosphorylates YY1, protecting YY1 from cleavage by CASP7 during apoptosis. Regulates transcription by direct phosphorylation of RNA polymerases I, II, III and IV. Also phosphorylates and regulates numerous transcription factors including NF-kappa-B, STAT1, CREB1, IRF1, IRF2, ATF1, ATF4, SRF, MAX, JUN, FOS, MYC and MYB. Phosphorylates Hsp90 and its co-chaperones FKBP4 and CDC37, which is essential for chaperone function. Mediates sequential phosphorylation of FNIP1, promoting its gradual interaction with Hsp90, leading to activate both kinase and non-kinase client proteins of Hsp90. Regulates Wnt signaling by phosphorylating CTNNB1 and the transcription factor LEF1. Acts as an ectokinase that phosphorylates several extracellular proteins. Phosphorylates PML at 'Ser-565' and primes it for ubiquitin-mediated degradation. Plays an important role in the circadian clock function by phosphorylating BMAL1 at 'Ser-90' which is pivotal for its interaction with CLOCK and which controls CLOCK nuclear entry. Phosphorylates FMR1, promoting FMR1-dependent formation of a membraneless compartment. May phosphorylate histone H2A on 'Ser-1'. This is Casein kinase II subunit alpha (CSNK2A1) from Oryctolagus cuniculus (Rabbit).